A 283-amino-acid chain; its full sequence is Formamidopyrimidine-DNA glycosylase (283 aa).

Residue P2 is the Schiff-base intermediate with DNA of the active site. E3 functions as the Proton donor in the catalytic mechanism. The Proton donor; for beta-elimination activity role is filled by K60. DNA is bound by residues H100, R119, and R164. The FPG-type zinc-finger motif lies at 249–283 (WVYNRAGEPCKVCGDVIQRIKLGGRSSHFCRQCQV). R273 functions as the Proton donor; for delta-elimination activity in the catalytic mechanism.

It belongs to the FPG family. In terms of assembly, monomer. Zn(2+) serves as cofactor.

The enzyme catalyses Hydrolysis of DNA containing ring-opened 7-methylguanine residues, releasing 2,6-diamino-4-hydroxy-5-(N-methyl)formamidopyrimidine.. The catalysed reaction is 2'-deoxyribonucleotide-(2'-deoxyribose 5'-phosphate)-2'-deoxyribonucleotide-DNA = a 3'-end 2'-deoxyribonucleotide-(2,3-dehydro-2,3-deoxyribose 5'-phosphate)-DNA + a 5'-end 5'-phospho-2'-deoxyribonucleoside-DNA + H(+). Functionally, involved in base excision repair of DNA damaged by oxidation or by mutagenic agents. Acts as a DNA glycosylase that recognizes and removes damaged bases. Has a preference for oxidized purines, such as 7,8-dihydro-8-oxoguanine (8-oxoG). Has AP (apurinic/apyrimidinic) lyase activity and introduces nicks in the DNA strand. Cleaves the DNA backbone by beta-delta elimination to generate a single-strand break at the site of the removed base with both 3'- and 5'-phosphates. In Nostoc sp. (strain PCC 7120 / SAG 25.82 / UTEX 2576), this protein is Formamidopyrimidine-DNA glycosylase.